We begin with the raw amino-acid sequence, 396 residues long: uncharacterized protein (396 aa).

Residues C8, C14, C17, and C95 each contribute to the [4Fe-4S] cluster site. S-adenosyl-L-methionine is bound by residues Q229, Y258, E279, and D325. C352 serves as the catalytic Nucleophile.

It belongs to the class I-like SAM-binding methyltransferase superfamily. RNA M5U methyltransferase family.

This is an uncharacterized protein from Chlamydia trachomatis serovar D (strain ATCC VR-885 / DSM 19411 / UW-3/Cx).